The sequence spans 406 residues: Imidazolonepropionase (406 aa).

Residues His72 and His74 each contribute to the Fe(3+) site. Zn(2+) contacts are provided by His72 and His74. Arg81, Tyr144, and His177 together coordinate 4-imidazolone-5-propanoate. N-formimidoyl-L-glutamate is bound at residue Tyr144. Residue His242 coordinates Fe(3+). His242 contacts Zn(2+). Gln245 serves as a coordination point for 4-imidazolone-5-propanoate. Position 317 (Asp317) interacts with Fe(3+). Zn(2+) is bound at residue Asp317. Positions 319 and 321 each coordinate N-formimidoyl-L-glutamate. Thr322 contributes to the 4-imidazolone-5-propanoate binding site.

This sequence belongs to the metallo-dependent hydrolases superfamily. HutI family. Requires Zn(2+) as cofactor. It depends on Fe(3+) as a cofactor.

The protein resides in the cytoplasm. It carries out the reaction 4-imidazolone-5-propanoate + H2O = N-formimidoyl-L-glutamate. It participates in amino-acid degradation; L-histidine degradation into L-glutamate; N-formimidoyl-L-glutamate from L-histidine: step 3/3. In terms of biological role, catalyzes the hydrolytic cleavage of the carbon-nitrogen bond in imidazolone-5-propanoate to yield N-formimidoyl-L-glutamate. It is the third step in the universal histidine degradation pathway. The protein is Imidazolonepropionase of Yersinia enterocolitica serotype O:8 / biotype 1B (strain NCTC 13174 / 8081).